A 180-amino-acid chain; its full sequence is Ribonuclease M5 (180 aa).

One can recognise a Toprim domain in the interval K5 to S90. Positions 11, 59, and 61 each coordinate Mg(2+).

It belongs to the ribonuclease M5 family. Requires Mg(2+) as cofactor.

The protein resides in the cytoplasm. It carries out the reaction Endonucleolytic cleavage of RNA, removing 21 and 42 nucleotides, respectively, from the 5'- and 3'-termini of a 5S-rRNA precursor.. Its function is as follows. Required for correct processing of both the 5' and 3' ends of 5S rRNA precursor. Cleaves both sides of a double-stranded region yielding mature 5S rRNA in one step. This Mycoplasma capricolum subsp. capricolum (strain California kid / ATCC 27343 / NCTC 10154) protein is Ribonuclease M5.